The sequence spans 241 residues: Aquaporin Z 1 (241 aa).

The helical transmembrane segment at Ala-23–Phe-43 threads the bilayer. An NPA 1 motif is present at residues Asn-63–Ala-65. 3 consecutive transmembrane segments (helical) span residues Ile-85–Gly-105, Leu-129–Gly-149, and Pro-156–Ile-176. Residues Asn-184 to Ala-186 carry the NPA 2 motif. Residues Trp-204–Phe-224 form a helical membrane-spanning segment.

It belongs to the MIP/aquaporin (TC 1.A.8) family. As to quaternary structure, homotetramer.

The protein localises to the cell inner membrane. The enzyme catalyses H2O(in) = H2O(out). Channel that permits osmotically driven movement of water in both directions. It is involved in the osmoregulation and in the maintenance of cell turgor during volume expansion in rapidly growing cells. It mediates rapid entry or exit of water in response to abrupt changes in osmolarity. This chain is Aquaporin Z 1, found in Agrobacterium fabrum (strain C58 / ATCC 33970) (Agrobacterium tumefaciens (strain C58)).